A 426-amino-acid polypeptide reads, in one-letter code: Pyrophosphate--fructose 6-phosphate 1-phosphotransferase 1 (426 aa).

Glycine 15 lines the diphosphate pocket. Mg(2+) is bound at residue aspartate 114. Substrate-binding positions include 140–142 (TID), 186–188 (MGR), glutamate 247, and 308–311 (YELR). Catalysis depends on aspartate 142, which acts as the Proton acceptor.

It belongs to the phosphofructokinase type A (PFKA) family. PPi-dependent PFK group II subfamily. Clade 'Short' sub-subfamily. As to quaternary structure, homotetramer. It depends on Mg(2+) as a cofactor.

It is found in the cytoplasm. It catalyses the reaction beta-D-fructose 6-phosphate + diphosphate = beta-D-fructose 1,6-bisphosphate + phosphate + H(+). Its pathway is carbohydrate degradation; glycolysis; D-glyceraldehyde 3-phosphate and glycerone phosphate from D-glucose: step 3/4. Its activity is regulated as follows. Non-allosteric. In terms of biological role, catalyzes the phosphorylation of D-fructose 6-phosphate, the first committing step of glycolysis. Uses inorganic phosphate (PPi) as phosphoryl donor instead of ATP like common ATP-dependent phosphofructokinases (ATP-PFKs), which renders the reaction reversible, and can thus function both in glycolysis and gluconeogenesis. Consistently, PPi-PFK can replace the enzymes of both the forward (ATP-PFK) and reverse (fructose-bisphosphatase (FBPase)) reactions. In Trichomonas vaginalis (strain ATCC PRA-98 / G3), this protein is Pyrophosphate--fructose 6-phosphate 1-phosphotransferase 1 (Pfk1).